The following is a 434-amino-acid chain: Anaerobic glycerol-3-phosphate dehydrogenase subunit B (434 aa).

Belongs to the anaerobic G-3-P dehydrogenase subunit B family. As to quaternary structure, composed of a catalytic GlpA/B dimer and of membrane bound GlpC. It depends on FMN as a cofactor.

The catalysed reaction is a quinone + sn-glycerol 3-phosphate = dihydroxyacetone phosphate + a quinol. It participates in polyol metabolism; glycerol degradation via glycerol kinase pathway; glycerone phosphate from sn-glycerol 3-phosphate (anaerobic route): step 1/1. Its function is as follows. Conversion of glycerol 3-phosphate to dihydroxyacetone. Uses fumarate or nitrate as electron acceptor. This is Anaerobic glycerol-3-phosphate dehydrogenase subunit B from Histophilus somni (strain 2336) (Haemophilus somnus).